Here is a 135-residue protein sequence, read N- to C-terminus: Large ribosomal subunit protein uL16c (135 aa).

Belongs to the universal ribosomal protein uL16 family. Part of the 50S ribosomal subunit.

The protein localises to the plastid. It localises to the chloroplast. This Piper cenocladum (Ant piper) protein is Large ribosomal subunit protein uL16c.